An 83-amino-acid polypeptide reads, in one-letter code: Apolipoprotein C-I, basic form (83 aa).

An N-terminal signal peptide occupies residues 1-26 (MRLFLSLPVLVVVLSMVLEGPAPAQG).

It belongs to the apolipoprotein C1 family.

It is found in the secreted. Inhibitor of lipoprotein binding to the low density lipoprotein (LDL) receptor, LDL receptor-related protein, and very low density lipoprotein (VLDL) receptor. Associates with high density lipoproteins (HDL) and the triacylglycerol-rich lipoproteins in the plasma and makes up about 10% of the protein of the VLDL and 2% of that of HDL. Appears to interfere directly with fatty acid uptake and is also the major plasma inhibitor of cholesteryl ester transfer protein (CETP). Binds free fatty acids and reduces their intracellular esterification. Modulates the interaction of APOE with beta-migrating VLDL and inhibits binding of beta-VLDL to the LDL receptor-related protein. The sequence is that of Apolipoprotein C-I, basic form (APOC1B) from Cercocebus atys (Sooty mangabey).